The following is a 443-amino-acid chain: Chromosomal replication initiator protein DnaA (443 aa).

The tract at residues 1–67 (MDAWSRSLER…RELLAHFAGF (67 aa)) is domain I, interacts with DnaA modulators. Residues 67 to 105 (FSDVFLEIGSRPRPVEAQNAPVSTPSAHVSSEPQVPFAG) form a domain II region. A domain III, AAA+ region region spans residues 106-323 (NLDNHYTFAN…GALNTLTARA (218 aa)). ATP contacts are provided by Gly-151, Gly-153, Lys-154, and Thr-155. The tract at residues 324–443 (NFTGRAITTE…WDKLIRKLSE (120 aa)) is domain IV, binds dsDNA.

Belongs to the DnaA family. As to quaternary structure, oligomerizes as a right-handed, spiral filament on DNA at oriC.

Its subcellular location is the cytoplasm. Functionally, plays an essential role in the initiation and regulation of chromosomal replication. ATP-DnaA binds to the origin of replication (oriC) to initiate formation of the DNA replication initiation complex once per cell cycle. Binds the DnaA box (a 9 base pair repeat at the origin) and separates the double-stranded (ds)DNA. Forms a right-handed helical filament on oriC DNA; dsDNA binds to the exterior of the filament while single-stranded (ss)DNA is stabiized in the filament's interior. The ATP-DnaA-oriC complex binds and stabilizes one strand of the AT-rich DNA unwinding element (DUE), permitting loading of DNA polymerase. After initiation quickly degrades to an ADP-DnaA complex that is not apt for DNA replication. Binds acidic phospholipids. In Stenotrophomonas maltophilia (strain K279a), this protein is Chromosomal replication initiator protein DnaA.